The primary structure comprises 582 residues: Zinc finger protein somi-1 (582 aa).

Disordered regions lie at residues 179–251 (LRPE…NNTD) and 352–377 (SAEP…KKEQ). Positions 188–226 (TQKSTNGVHRSTSNSSAETLRNNSVSAATVSPSDDNSLN) are enriched in polar residues. The span at 227–244 (SPALTSSGSAGSGTPPLG) shows a compositional bias: low complexity. Residues 352–368 (SAEPMKRHRVEAHEKQS) show a composition bias toward basic and acidic residues. The C2H2-type; Degenerate zinc-finger motif lies at 454–477 (YICEDCDFVTVYKGNMKRHLNTCH). A disordered region spans residues 513–582 (AHKANSSRGR…PPPPPPPMLL (70 aa)). Residues 551–570 (LLESLASSSSSMGGYSNGNN) are compositionally biased toward low complexity. Residues 572–582 (QPPPPPPPMLL) show a composition bias toward pro residues.

As to quaternary structure, may interact with swsn-9; the interaction promotes hypodermal differentiation. As to expression, expressed in hypodermal seam cells, the somatic gonad and vulval precursor cells, body wall muscle and head neurons.

The protein localises to the nucleus. DNA-binding protein which binds to the promoters of let-60, lin-14 and lin-28, possibly to regulate genes involved in hypodermal and vulval development. Together with miRNAs mir-84 and let-7 may direct terminal differentiation of the seam cells, exit from the molting cycle, and vulva formation. Does not regulate the expression of mir-84. May promote hypodermal differentiation in association with swsn-9, a component of SWI/SNF chromatin remodeling complexes. This Caenorhabditis elegans protein is Zinc finger protein somi-1.